Reading from the N-terminus, the 251-residue chain is Proteasome subunit alpha type-4-like (251 aa).

Belongs to the peptidase T1A family. The 26S proteasome consists of a 20S proteasome core and two 19S regulatory subunits. The 20S proteasome core is composed of 28 subunits that are arranged in four stacked rings, resulting in a barrel-shaped structure. The two end rings are each formed by seven alpha subunits, and the two central rings are each formed by seven beta subunits. The catalytic chamber with the active sites is on the inside of the barrel. As to expression, testis, prominent after meiosis II. After meiosis, predominantly localized to the haploid spermatid nuclei of the 64-cell cysts, remaining during the elongation and condensation of the spermatid nuclei. In mature, motile sperm, expression is seen exclusively in the sperm head.

The protein localises to the nucleus. Its function is as follows. The proteasome is a multicatalytic proteinase complex which is characterized by its ability to cleave peptides with Arg, Phe, Tyr, Leu, and Glu adjacent to the leaving group at neutral or slightly basic pH. The proteasome has an ATP-dependent proteolytic activity. The chain is Proteasome subunit alpha type-4-like (Prosalpha3T) from Drosophila melanogaster (Fruit fly).